The sequence spans 224 residues: Ribosome maturation factor RimM (224 aa).

Residues 1-12 (MARRPGSSSRGP) show a composition bias toward low complexity. 2 disordered regions span residues 1–46 (MARR…PSLV) and 204–224 (VADPPEDLFAPPGPKPADDPG). Residues 137 to 211 (EDEFFLTDLI…KVVADPPEDL (75 aa)) enclose the PRC barrel domain.

The protein belongs to the RimM family. In terms of assembly, binds ribosomal protein uS19.

The protein resides in the cytoplasm. An accessory protein needed during the final step in the assembly of 30S ribosomal subunit, possibly for assembly of the head region. Essential for efficient processing of 16S rRNA. May be needed both before and after RbfA during the maturation of 16S rRNA. It has affinity for free ribosomal 30S subunits but not for 70S ribosomes. In Methylorubrum populi (strain ATCC BAA-705 / NCIMB 13946 / BJ001) (Methylobacterium populi), this protein is Ribosome maturation factor RimM.